The chain runs to 365 residues: Ribosomal RNA large subunit methyltransferase M (365 aa).

S-adenosyl-L-methionine contacts are provided by residues S188, 221–224 (CPGG), D240, D260, and D277. K306 (proton acceptor) is an active-site residue.

It belongs to the class I-like SAM-binding methyltransferase superfamily. RNA methyltransferase RlmE family. RlmM subfamily. Monomer.

The protein localises to the cytoplasm. It carries out the reaction cytidine(2498) in 23S rRNA + S-adenosyl-L-methionine = 2'-O-methylcytidine(2498) in 23S rRNA + S-adenosyl-L-homocysteine + H(+). Catalyzes the 2'-O-methylation at nucleotide C2498 in 23S rRNA. This is Ribosomal RNA large subunit methyltransferase M from Proteus mirabilis (strain HI4320).